The following is a 452-amino-acid chain: tRNA modification GTPase MnmE (452 aa).

(6S)-5-formyl-5,6,7,8-tetrahydrofolate-binding residues include R24, E81, and R120. In terms of domain architecture, TrmE-type G spans 216-373; sequence GIKTVIVGAP…LFGAIGRWAD (158 aa). GTP contacts are provided by residues 226-231, 245-251, and 270-273; these read NVGKSS, SAEPGTT, and DTAG. 2 residues coordinate Mg(2+): S230 and T251. Residue K452 coordinates (6S)-5-formyl-5,6,7,8-tetrahydrofolate.

It belongs to the TRAFAC class TrmE-Era-EngA-EngB-Septin-like GTPase superfamily. TrmE GTPase family. As to quaternary structure, homodimer. Heterotetramer of two MnmE and two MnmG subunits. The cofactor is K(+).

The protein localises to the cytoplasm. In terms of biological role, exhibits a very high intrinsic GTPase hydrolysis rate. Involved in the addition of a carboxymethylaminomethyl (cmnm) group at the wobble position (U34) of certain tRNAs, forming tRNA-cmnm(5)s(2)U34. The polypeptide is tRNA modification GTPase MnmE (Opitutus terrae (strain DSM 11246 / JCM 15787 / PB90-1)).